Here is a 345-residue protein sequence, read N- to C-terminus: Phosphate acyltransferase (345 aa).

It belongs to the PlsX family. Homodimer. Probably interacts with PlsY.

It is found in the cytoplasm. It carries out the reaction a fatty acyl-[ACP] + phosphate = an acyl phosphate + holo-[ACP]. Its pathway is lipid metabolism; phospholipid metabolism. In terms of biological role, catalyzes the reversible formation of acyl-phosphate (acyl-PO(4)) from acyl-[acyl-carrier-protein] (acyl-ACP). This enzyme utilizes acyl-ACP as fatty acyl donor, but not acyl-CoA. The polypeptide is Phosphate acyltransferase (Thermodesulfovibrio yellowstonii (strain ATCC 51303 / DSM 11347 / YP87)).